A 102-amino-acid chain; its full sequence is Small ribosomal subunit protein uS10 (102 aa).

This sequence belongs to the universal ribosomal protein uS10 family. Part of the 30S ribosomal subunit.

In terms of biological role, involved in the binding of tRNA to the ribosomes. The polypeptide is Small ribosomal subunit protein uS10 (Lactobacillus helveticus (strain DPC 4571)).